Here is a 269-residue protein sequence, read N- to C-terminus: MGYFEQKFLQLQKQKQGAFVPFVTLCDPNFDRSFEIICTLVDNGADALELGFPFSDPLLDGSVIQAANHRALNAGCSTKESFQLIAKVRSKYPDIPISLLLCANLIYAQTLDGFYQRCAEVGVDAVLVADIPLLASEPYIQSAQKYDIQPVFICPPNADETTLKAVAEKSKGYIYLVSRAGVTSAENQQSAKNLANLIKGLKKYGSAPILQGFGIAQPQQVKDVLKSGVAGAISGSAIVQIIEQNLTDREKCLSELAEFVQKMKQATLL.

Residues Glu-49 and Asp-60 each act as proton acceptor in the active site.

This sequence belongs to the TrpA family. In terms of assembly, tetramer of two alpha and two beta chains.

The catalysed reaction is (1S,2R)-1-C-(indol-3-yl)glycerol 3-phosphate + L-serine = D-glyceraldehyde 3-phosphate + L-tryptophan + H2O. Its pathway is amino-acid biosynthesis; L-tryptophan biosynthesis; L-tryptophan from chorismate: step 5/5. In terms of biological role, the alpha subunit is responsible for the aldol cleavage of indoleglycerol phosphate to indole and glyceraldehyde 3-phosphate. The chain is Tryptophan synthase alpha chain from Histophilus somni (strain 2336) (Haemophilus somnus).